We begin with the raw amino-acid sequence, 162 residues long: Calcium-binding protein 4b (162 aa).

4 EF-hand domains span residues 10–45 (ELTNATNEAIKAADKNGDNQLSKKEVNDMYKKCKYP), 46–81 (NPTLATNSLFELFDLDKDGKLSVNEVKTAVLVDYII), 85–120 (TCLKKFVDIIFKADSNKDNKITWDEARQYFITSGSN), and 123–158 (QAKVLANSMFEDVDSDDDKCITREELREYAIEYFEI). The Ca(2+) site is built by Asp-23, Asn-25, Asp-27, Gln-29, Glu-34, Asp-59, Asp-61, Asp-63, Lys-65, and Glu-70. Asp-136, Asp-138, Asp-140, Cys-142, and Glu-147 together coordinate Ca(2+).

This is Calcium-binding protein 4b (cbpD2) from Dictyostelium discoideum (Social amoeba).